Consider the following 57-residue polypeptide: UPF0391 membrane protein HNE_2348 (57 aa).

Helical transmembrane passes span 4–24 and 27–47; these read WALTFFILAIIAALLGFGGIA and AASIAKILFFVFLALLVITFV.

It belongs to the UPF0391 family.

It localises to the cell membrane. The sequence is that of UPF0391 membrane protein HNE_2348 from Hyphomonas neptunium (strain ATCC 15444).